Consider the following 453-residue polypeptide: Jacalin-related lectin 40 (453 aa).

Jacalin-type lectin domains follow at residues 1-142, 154-296, and 306-449; these read MAQK…YFTT, HIKL…YFSS, and PEKL…YVVP. Position 2 is an N-acetylalanine (Ala2).

This sequence belongs to the jacalin lectin family. Expressed in roots.

This is Jacalin-related lectin 40 (JAL40) from Arabidopsis thaliana (Mouse-ear cress).